The following is a 342-amino-acid chain: uncharacterized protein (342 aa).

The protein belongs to the proline racemase family.

This is an uncharacterized protein from Brucella canis (strain ATCC 23365 / NCTC 10854 / RM-666).